Consider the following 443-residue polypeptide: Thymidine phosphorylase (443 aa).

It belongs to the thymidine/pyrimidine-nucleoside phosphorylase family. Homodimer.

The catalysed reaction is thymidine + phosphate = 2-deoxy-alpha-D-ribose 1-phosphate + thymine. It participates in pyrimidine metabolism; dTMP biosynthesis via salvage pathway; dTMP from thymine: step 1/2. Its function is as follows. The enzymes which catalyze the reversible phosphorolysis of pyrimidine nucleosides are involved in the degradation of these compounds and in their utilization as carbon and energy sources, or in the rescue of pyrimidine bases for nucleotide synthesis. The chain is Thymidine phosphorylase from Shewanella woodyi (strain ATCC 51908 / MS32).